A 170-amino-acid polypeptide reads, in one-letter code: MSSSSYRDSYFQYRHLPAPHHILYAEWNQDILALPDEVANITMAMKDNTRTDAEEGRAPQDGERNSNVRESAQGKALMTSEQNSNRYWNSFHDEDDWNLFNGMELESNGVVTFAGQAFDHSLNGGTNSRNDGANEPRKETITGSIFDRRITQLAYARNNGWHELALPQSR.

Composition is skewed to basic and acidic residues over residues 48–67 (NTRT…RNSN) and 132–141 (GANEPRKETI). 2 disordered regions span residues 48–81 (NTRT…MTSE) and 122–141 (LNGG…KETI).

It belongs to the APC13 family. In terms of assembly, the APC/C is composed of at least 13 subunits that stay tightly associated throughout the cell cycle: APC1, APC2, APC4, APC5, APC9, APC11, CDC16, CDC23, CDC26, CDC27, DOC1, MND2 and SWM1. SWM1 interacts directly with CDC23 and APC5, and is required to tether APC9, CDC16, CDC26 and CDC27 to the complex.

The protein operates within protein modification; protein ubiquitination. Its function is as follows. Component of the anaphase promoting complex/cyclosome (APC/C), a cell cycle-regulated E3 ubiquitin-protein ligase complex that controls progression through mitosis and the G1 phase of the cell cycle. The APC/C is thought to confer substrate specificity and, in the presence of ubiquitin-conjugating E2 enzymes, it catalyzes the formation of protein-ubiquitin conjugates that are subsequently degraded by the 26S proteasome. In early mitosis, the APC/C is activated by CDC20 and targets securin PDS1, the B-type cyclin CLB5, and other anaphase inhibitory proteins for proteolysis, thereby triggering the separation of sister chromatids at the metaphase-to-anaphase transition. In late mitosis and in G1, degradation of CLB5 allows activation of the APC/C by CDH1, which is needed to destroy CDC20 and the B-type cyclin CLB2 to allow exit from mitosis and creating the low CDK state necessary for cytokinesis and for reforming prereplicative complexes in G1 prior to another round of replication. SWM1 is required for APC/C activity in meiosis. The protein is Anaphase-promoting complex subunit SWM1 (SWM1) of Saccharomyces cerevisiae (strain ATCC 204508 / S288c) (Baker's yeast).